The following is a 340-amino-acid chain: Protein SSUH2 homolog (340 aa).

The segment covering Met-1–Met-11 has biased composition (acidic residues). Residues Met-1–Ser-20 form a disordered region.

In terms of tissue distribution, widely expressed, with highest levels in the liver, intestine, tongue and underjaw.

It is found in the cytoplasm. The protein localises to the nucleus. Its function is as follows. Plays a role in odontogenesis. This is Protein SSUH2 homolog from Mus musculus (Mouse).